The sequence spans 317 residues: Protoheme IX farnesyltransferase (317 aa).

Helical transmembrane passes span 44–64, 93–113, 116–136, 143–163, 178–198, 221–241, 243–263, and 288–308; these read IGLI…ANTF, HASV…WVLC, VLAG…YTKY, LNIV…WAVI, AIVL…ALAM, VTRQ…LLIP, ASWI…VMAV, and LAVY…TIGG.

Belongs to the UbiA prenyltransferase family. Protoheme IX farnesyltransferase subfamily.

The protein localises to the cell membrane. It carries out the reaction heme b + (2E,6E)-farnesyl diphosphate + H2O = Fe(II)-heme o + diphosphate. Its pathway is porphyrin-containing compound metabolism; heme O biosynthesis; heme O from protoheme: step 1/1. Functionally, converts heme B (protoheme IX) to heme O by substitution of the vinyl group on carbon 2 of heme B porphyrin ring with a hydroxyethyl farnesyl side group. This is Protoheme IX farnesyltransferase from Corynebacterium diphtheriae (strain ATCC 700971 / NCTC 13129 / Biotype gravis).